We begin with the raw amino-acid sequence, 597 residues long: Leishmanolysin (597 aa).

An N-terminal signal peptide occupies residues 1–39 (MSVDSSSTHRHRCVAARLVPLAAAGAAVTVAVGTAAAWA). A propeptide spans 40–99 (HAGAVQHRCIHDAMQARVRQSVAAQRMAPSAVSAVGLPHVTLDAGNTAAGADPSTGTANV) (activation peptide). Disulfide bonds link C124/C141 and C190/C229. Zn(2+) is bound at residue H263. E264 is a catalytic residue. Residue H267 coordinates Zn(2+). Residue N299 is glycosylated (N-linked (GlcNAc...) asparagine). Disulfide bonds link C313/C383, C390/C452, C403/C422, C412/C486, C463/C507, C512/C562, and C532/C555. H332 contacts Zn(2+). N404 carries an N-linked (GlcNAc...) asparagine glycan. N574 carries GPI-anchor amidated asparagine lipidation. A propeptide spans 575–597 (AAGRRGPRAATALVVAALLAVAL) (removed in mature form).

It belongs to the peptidase M8 family. The cofactor is Zn(2+).

The protein localises to the cell membrane. The enzyme catalyses Preference for hydrophobic residues at P1 and P1' and basic residues at P2' and P3'. A model nonapeptide is cleaved at -Ala-Tyr-|-Leu-Lys-Lys-.. Functionally, has an integral role during the infection of macrophages in the mammalian host. The sequence is that of Leishmanolysin (gp63) from Leishmania amazonensis.